Consider the following 498-residue polypeptide: Trehalose-6-phosphate synthase (498 aa).

Arg-28 is a binding site for D-glucose 6-phosphate. 48-49 (GG) contributes to the UDP-alpha-D-glucose binding site. D-glucose 6-phosphate contacts are provided by Tyr-106 and Asp-160. 2 residues coordinate UDP-alpha-D-glucose: Arg-302 and Lys-307. Arg-340 provides a ligand contact to D-glucose 6-phosphate. A UDP-alpha-D-glucose-binding site is contributed by 405-409 (LVAKE).

It belongs to the glycosyltransferase 20 family. In terms of assembly, homotetramer.

The catalysed reaction is ADP-alpha-D-glucose + D-glucose 6-phosphate = alpha,alpha-trehalose 6-phosphate + ADP + H(+). The enzyme catalyses CDP-alpha-D-glucose + D-glucose 6-phosphate = alpha,alpha-trehalose 6-phosphate + CDP + H(+). It catalyses the reaction GDP-alpha-D-glucose + D-glucose 6-phosphate = alpha,alpha-trehalose 6-phosphate + GDP + H(+). It carries out the reaction TDP-alpha-D-glucose + D-glucose 6-phosphate = 5-methyl-UDP + alpha,alpha-trehalose 6-phosphate + H(+). The catalysed reaction is D-glucose 6-phosphate + UDP-alpha-D-glucose = alpha,alpha-trehalose 6-phosphate + UDP + H(+). The protein operates within glycan biosynthesis; trehalose biosynthesis. Its function is as follows. Probably involved in the osmoprotection via the biosynthesis of trehalose and in the production of glycogen and alpha-glucan via the TreS-Pep2 branch involved in the biosynthesis of maltose-1-phosphate (M1P). Catalyzes the transfer of glucose from UDP-glucose (UDP-Glc) to D-glucose 6-phosphate (Glc-6-P) to form trehalose-6-phosphate. Probably also able to use ADP-Glc, CDP-Glc, GDP-Glc and TDP-Glc as glucosyl donors. This Mycobacterium leprae (strain TN) protein is Trehalose-6-phosphate synthase.